Reading from the N-terminus, the 293-residue chain is Formamidopyrimidine-DNA glycosylase (293 aa).

Pro-2 acts as the Schiff-base intermediate with DNA in catalysis. The active-site Proton donor is Glu-3. The Proton donor; for beta-elimination activity role is filled by Lys-61. The DNA site is built by His-104, Arg-123, and Lys-169. The FPG-type zinc-finger motif lies at 255 to 289 (DAYGREGEPCRRCGAIMRRDKFMNRSSFYCPRCQP). The Proton donor; for delta-elimination activity role is filled by Arg-279.

It belongs to the FPG family. Monomer. It depends on Zn(2+) as a cofactor.

It carries out the reaction Hydrolysis of DNA containing ring-opened 7-methylguanine residues, releasing 2,6-diamino-4-hydroxy-5-(N-methyl)formamidopyrimidine.. It catalyses the reaction 2'-deoxyribonucleotide-(2'-deoxyribose 5'-phosphate)-2'-deoxyribonucleotide-DNA = a 3'-end 2'-deoxyribonucleotide-(2,3-dehydro-2,3-deoxyribose 5'-phosphate)-DNA + a 5'-end 5'-phospho-2'-deoxyribonucleoside-DNA + H(+). Involved in base excision repair of DNA damaged by oxidation or by mutagenic agents. Acts as a DNA glycosylase that recognizes and removes damaged bases. Has a preference for oxidized purines, such as 7,8-dihydro-8-oxoguanine (8-oxoG). Has AP (apurinic/apyrimidinic) lyase activity and introduces nicks in the DNA strand. Cleaves the DNA backbone by beta-delta elimination to generate a single-strand break at the site of the removed base with both 3'- and 5'-phosphates. The protein is Formamidopyrimidine-DNA glycosylase of Mycolicibacterium vanbaalenii (strain DSM 7251 / JCM 13017 / BCRC 16820 / KCTC 9966 / NRRL B-24157 / PYR-1) (Mycobacterium vanbaalenii).